The sequence spans 909 residues: Myb-like protein Q (909 aa).

3 disordered regions span residues Thr-15–Gln-65, Gln-84–Leu-149, and Ser-216–Trp-280. The span at Asn-17 to His-46 shows a compositional bias: low complexity. Residues Gln-47 to Gln-56 show a composition bias toward basic residues. Over residues Gln-84–Gln-126 the composition is skewed to low complexity. Basic residues predominate over residues Gln-127–Gln-139. A compositionally biased stretch (polar residues) spans Ser-216–Pro-226. HTH myb-type domains lie at Ser-272–Val-327 and Arg-328–Ile-378. 2 DNA-binding regions (H-T-H motif) span residues Trp-300–Leu-323 and Trp-351–Leu-374. Residues Gly-379 to Lys-389 are compositionally biased toward basic and acidic residues. Disordered stretches follow at residues Gly-379–Ile-482, Gln-497–Gln-531, Ser-616–Gln-642, Tyr-672–Glu-748, and Leu-826–Pro-855. Residues Asp-390–Asp-401 are compositionally biased toward acidic residues. Low complexity-rich tracts occupy residues Ser-415–Ser-431 and Ser-444–Ile-482. A compositionally biased stretch (polar residues) spans Gln-497–Ser-508. Low complexity-rich tracts occupy residues Tyr-622–Gln-642, Tyr-672–Gln-726, Asn-733–Ser-744, and Leu-826–Asn-851.

The protein resides in the nucleus. This Dictyostelium discoideum (Social amoeba) protein is Myb-like protein Q (mybQ).